A 501-amino-acid chain; its full sequence is Lysine--tRNA ligase (501 aa).

Residues E402 and E409 each coordinate Mg(2+).

Belongs to the class-II aminoacyl-tRNA synthetase family. As to quaternary structure, homodimer. The cofactor is Mg(2+).

It is found in the cytoplasm. The enzyme catalyses tRNA(Lys) + L-lysine + ATP = L-lysyl-tRNA(Lys) + AMP + diphosphate. The polypeptide is Lysine--tRNA ligase (lysS) (Helicobacter pylori (strain J99 / ATCC 700824) (Campylobacter pylori J99)).